The sequence spans 105 residues: MNFQKLLKEAQKAQKKAAEVQERLERMTVVGSAQGLVEVEANGHGKILALRLKPEALKAFQDDPEGLEDLLLVAIQDAQTKAHELSEKEMAKELGGVGQMLGKLF.

The protein belongs to the YbaB/EbfC family. As to quaternary structure, homodimer.

Its subcellular location is the cytoplasm. It is found in the nucleoid. Binds to DNA and alters its conformation. May be involved in regulation of gene expression, nucleoid organization and DNA protection. In Thermus thermophilus (strain ATCC 27634 / DSM 579 / HB8), this protein is Nucleoid-associated protein TTHA1599.